Here is a 420-residue protein sequence, read N- to C-terminus: L-rhamnose isomerase (420 aa).

The Mn(2+) site is built by His-264, Asp-296, and Asp-298.

This sequence belongs to the rhamnose isomerase family. The cofactor is Mn(2+).

The protein resides in the cytoplasm. The enzyme catalyses L-rhamnopyranose = L-rhamnulose. It functions in the pathway carbohydrate degradation; L-rhamnose degradation; glycerone phosphate from L-rhamnose: step 1/3. Catalyzes the interconversion of L-rhamnose and L-rhamnulose. The sequence is that of L-rhamnose isomerase from Listeria innocua serovar 6a (strain ATCC BAA-680 / CLIP 11262).